A 530-amino-acid chain; its full sequence is Calcium uptake protein 3, mitochondrial (530 aa).

The N-terminal 43 residues, 1–43 (MAALRRLLWPPPRVSPPLCAHQPLLGPWGRPAVTTLGLPGRPF), are a transit peptide targeting the mitochondrion. Residues 92–115 (GSPATGRPSKSAATEPEDPPRGRG) are disordered. The region spanning 232-267 (KPHAGFRIAFNMFDTDGNEMVDKKEFLVLQEIFRKK) is the EF-hand 1 domain. Residues Asp245, Asp247, Asn249, Met251, Asp253, and Glu256 each coordinate Ca(2+). In terms of domain architecture, EF-hand 2; degenerate spans 401 to 436 (VENTSVFLENVRYSIPEEKGITFDEFRSFFQFLNNL). The region spanning 470-505 (FSPHLVNTVFKIFDVDKDDQLSYKEFIGIMKDRLHR) is the EF-hand 3 domain. 5 residues coordinate Ca(2+): Asp483, Asp485, Asp487, Gln489, and Glu494.

The protein belongs to the MICU1 family. MICU3 subfamily. As to quaternary structure, heterodimer; disulfide-linked; heterodimerizes with MICU1. Component of the uniplex complex, composed of MCU, EMRE/SMDT1, MICU1 and MICU3 in a 4:4:1:1 stoichiometry. As to expression, specifically expressed in the central nervous system and skeletal muscle.

It is found in the mitochondrion intermembrane space. The protein localises to the mitochondrion inner membrane. Its function is as follows. Tissue-specific calcium sensor of the mitochondrial calcium uniporter (MCU) channel, which specifically regulates MCU channel activity in the central nervous system and skeletal muscle. Senses calcium level via its EF-hand domains: compared to MICU1 and MICU2, MICU3 has a higher affinity for calcium. MICU1 and MICU3 form a disulfide-linked heterodimer that stimulates and inhibits MCU activity, depending on the concentration of calcium. At low calcium levels, MICU1 occludes the pore of the MCU channel, preventing mitochondrial calcium uptake. At higher calcium levels, calcium-binding to MICU1 and MICU3 induces a conformational change that weakens MCU-MICU1 interactions and moves the MICU1-MICU3 heterodimer away from the pore, allowing calcium permeation through the MCU channel. The high calcium affinity of MICU3 lowers the calcium threshold necessary for calcium permeation through the MCU channel. The MICU1-MICU3 heterodimer promotes flexibility of neurotransmission in neuronal cells by enhancing mitochondrial calcium uptake in presynapses. It is also required to increase mitochondrial calcium uptake in skeletal muscle cells, thereby increasing ATP production. The sequence is that of Calcium uptake protein 3, mitochondrial from Homo sapiens (Human).